The following is a 132-amino-acid chain: Agouti-signaling protein (132 aa).

Positions 1 to 22 are cleaved as a signal peptide; sequence MDVTRLLLATLLVFLCFFTANS. Residue Asn-39 is glycosylated (N-linked (GlcNAc...) asparagine). Residues 62–85 are disordered; the sequence is IGRKAAEKKRSSKKEASMKKVVRP. The span at 65–79 shows a compositional bias: basic and acidic residues; sequence KAAEKKRSSKKEASM. Cystine bridges form between Cys-93–Cys-108, Cys-100–Cys-114, Cys-107–Cys-125, Cys-111–Cys-132, and Cys-116–Cys-123. Positions 93-132 constitute an Agouti domain; that stretch reads CVATRNSCKPPAPACCDPCASCQCRFFRSACSCRVLSLNC.

Widely expressed at low levels. Highly expressed in the skin. Expressed in adipose tissue.

It is found in the secreted. Functionally, involved in the regulation of melanogenesis. The binding of ASP to MC1R precludes alpha-MSH initiated signaling and thus blocks production of cAMP, leading to a down-regulation of eumelanogenesis (brown/black pigment) and thus increasing synthesis of pheomelanin (yellow/red pigment). In higher primates, agouti may affect the quality of hair pigmentation rather than its pattern of deposition. Could well play a role in neuroendocrine aspects of melanocortin action. May have some functional role in regulating the lipid metabolism with adipocytes. The chain is Agouti-signaling protein (ASIP) from Homo sapiens (Human).